Here is a 186-residue protein sequence, read N- to C-terminus: Transcriptional repressor NrdR (186 aa).

The segment at 3 to 34 (CPFCRHPDSRVVDSREAEEGAAIRRRRSCPAC) is a zinc-finger region. Residues 46 to 136 (LRVRKRSGAT…VYLAFESLGD (91 aa)) enclose the ATP-cone domain. The segment at 149–169 (AGGGEPPVAGKPTTMPAATGA) is disordered.

This sequence belongs to the NrdR family. Zn(2+) serves as cofactor.

Functionally, negatively regulates transcription of bacterial ribonucleotide reductase nrd genes and operons by binding to NrdR-boxes. The chain is Transcriptional repressor NrdR from Parafrankia sp. (strain EAN1pec).